Here is a 465-residue protein sequence, read N- to C-terminus: ATP synthase subunit beta (465 aa).

An ATP-binding site is contributed by 154–161 (GGAGVGKT).

This sequence belongs to the ATPase alpha/beta chains family. As to quaternary structure, F-type ATPases have 2 components, CF(1) - the catalytic core - and CF(0) - the membrane proton channel. CF(1) has five subunits: alpha(3), beta(3), gamma(1), delta(1), epsilon(1). CF(0) has three main subunits: a(1), b(2) and c(9-12). The alpha and beta chains form an alternating ring which encloses part of the gamma chain. CF(1) is attached to CF(0) by a central stalk formed by the gamma and epsilon chains, while a peripheral stalk is formed by the delta and b chains.

It localises to the cell inner membrane. The catalysed reaction is ATP + H2O + 4 H(+)(in) = ADP + phosphate + 5 H(+)(out). Functionally, produces ATP from ADP in the presence of a proton gradient across the membrane. The catalytic sites are hosted primarily by the beta subunits. This chain is ATP synthase subunit beta, found in Methylobacillus flagellatus (strain ATCC 51484 / DSM 6875 / VKM B-1610 / KT).